The chain runs to 209 residues: Eukaryotic translation initiation factor 4E (209 aa).

MRNA contacts are provided by residues 51 to 52 (WH), 97 to 98 (WE), and 153 to 158 (RKQAYR).

The protein belongs to the eukaryotic initiation factor 4E family. As to quaternary structure, eIF4F is a multi-subunit complex, the composition of which varies with external and internal environmental conditions. It is composed of at least eIF4A, eIF4E and eIF4G. eIF4E is also known to interact with other partners.

Its function is as follows. Recognizes and binds the 7-methylguanosine-containing mRNA cap during an early step in the initiation of protein synthesis and facilitates ribosome binding by inducing the unwinding of the mRNAs secondary structures. This is Eukaryotic translation initiation factor 4E (TIF45) from Candida albicans (strain SC5314 / ATCC MYA-2876) (Yeast).